The primary structure comprises 445 residues: Phosphoglucosamine mutase (445 aa).

Catalysis depends on serine 102, which acts as the Phosphoserine intermediate. The Mg(2+) site is built by serine 102, aspartate 241, aspartate 243, and aspartate 245. Serine 102 bears the Phosphoserine mark.

Belongs to the phosphohexose mutase family. It depends on Mg(2+) as a cofactor. In terms of processing, activated by phosphorylation.

It catalyses the reaction alpha-D-glucosamine 1-phosphate = D-glucosamine 6-phosphate. Functionally, catalyzes the conversion of glucosamine-6-phosphate to glucosamine-1-phosphate. The polypeptide is Phosphoglucosamine mutase (Shewanella sp. (strain ANA-3)).